Reading from the N-terminus, the 166-residue chain is Methylmalonyl-CoA epimerase, mitochondrial (166 aa).

A mitochondrion-targeting transit peptide spans 1–23 (MFKQLIKTTLTNSRSFSTNTGSG). Residues 37–166 (KLNHVAIATP…NGVLVELEEK (130 aa)) form the VOC domain. Co(2+) contacts are provided by His-40, His-112, and Glu-162.

It belongs to the methylmalonyl-CoA epimerase family.

It localises to the mitochondrion. The catalysed reaction is (R)-methylmalonyl-CoA = (S)-methylmalonyl-CoA. In terms of biological role, methylmalonyl-CoA epimerase involved in propionyl-CoA metabolism. This Dictyostelium discoideum (Social amoeba) protein is Methylmalonyl-CoA epimerase, mitochondrial (mcee).